The primary structure comprises 311 residues: 4-hydroxy-3-methylbut-2-enyl diphosphate reductase (311 aa).

Cysteine 12 provides a ligand contact to [4Fe-4S] cluster. The (2E)-4-hydroxy-3-methylbut-2-enyl diphosphate site is built by histidine 43 and histidine 81. The dimethylallyl diphosphate site is built by histidine 43 and histidine 81. Residues histidine 43 and histidine 81 each contribute to the isopentenyl diphosphate site. Cysteine 103 serves as a coordination point for [4Fe-4S] cluster. Histidine 131 serves as a coordination point for (2E)-4-hydroxy-3-methylbut-2-enyl diphosphate. Position 131 (histidine 131) interacts with dimethylallyl diphosphate. Residue histidine 131 coordinates isopentenyl diphosphate. Catalysis depends on glutamate 133, which acts as the Proton donor. Threonine 170 is a binding site for (2E)-4-hydroxy-3-methylbut-2-enyl diphosphate. [4Fe-4S] cluster is bound at residue cysteine 198. Residues serine 226, asparagine 228, and serine 271 each coordinate (2E)-4-hydroxy-3-methylbut-2-enyl diphosphate. Positions 226, 228, and 271 each coordinate dimethylallyl diphosphate. The isopentenyl diphosphate site is built by serine 226, asparagine 228, and serine 271.

The protein belongs to the IspH family. The cofactor is [4Fe-4S] cluster.

The enzyme catalyses isopentenyl diphosphate + 2 oxidized [2Fe-2S]-[ferredoxin] + H2O = (2E)-4-hydroxy-3-methylbut-2-enyl diphosphate + 2 reduced [2Fe-2S]-[ferredoxin] + 2 H(+). It catalyses the reaction dimethylallyl diphosphate + 2 oxidized [2Fe-2S]-[ferredoxin] + H2O = (2E)-4-hydroxy-3-methylbut-2-enyl diphosphate + 2 reduced [2Fe-2S]-[ferredoxin] + 2 H(+). It functions in the pathway isoprenoid biosynthesis; dimethylallyl diphosphate biosynthesis; dimethylallyl diphosphate from (2E)-4-hydroxy-3-methylbutenyl diphosphate: step 1/1. It participates in isoprenoid biosynthesis; isopentenyl diphosphate biosynthesis via DXP pathway; isopentenyl diphosphate from 1-deoxy-D-xylulose 5-phosphate: step 6/6. Catalyzes the conversion of 1-hydroxy-2-methyl-2-(E)-butenyl 4-diphosphate (HMBPP) into a mixture of isopentenyl diphosphate (IPP) and dimethylallyl diphosphate (DMAPP). Acts in the terminal step of the DOXP/MEP pathway for isoprenoid precursor biosynthesis. This is 4-hydroxy-3-methylbut-2-enyl diphosphate reductase from Brevibacillus brevis (strain 47 / JCM 6285 / NBRC 100599).